The chain runs to 262 residues: Versicolorin reductase 1 (262 aa).

NADP(+) is bound by residues Ile21, Asp67, Asn94, and Arg127. Residues Ser143 and Ser144 each act as proton donor in the active site. NADP(+) contacts are provided by Tyr158, Lys162, Ile191, and Thr193. The active-site Proton acceptor is Tyr158. Lys162 (lowers pKa of active site Tyr) is an active-site residue.

The protein belongs to the short-chain dehydrogenases/reductases (SDR) family.

The protein localises to the cytoplasm. It is found in the cytosol. The enzyme catalyses (4S,8R)-2,13,16,20-tetrahydroxy-7,9-dioxapentacyclo[10.8.0.0(3,10).0(4,8).0(14,19)]icosa-1(12),2,5,10,13,16,19-heptaen-18-one + NADPH + H(+) = (4S,8R,16R)-2,13,16,20-tetrahydroxy-7,9-dioxapentacyclo[10.8.0.0(3,10).0(4,8).0(14,19)]icosa-1(12),2,5,10,13,19-hexaen-18-one + NADP(+). The protein operates within mycotoxin biosynthesis; aflatoxin biosynthesis. Cytochrome P450 monooxygenase; part of the gene cluster that mediates the biosynthesis of aflatoxins, a group of polyketide-derived furanocoumarins, and part of the most toxic and carcinogenic compounds among the known mycotoxins. The four major aflatoxins produced by A.parasiticus are aflatoxin B1 (AFB1), aflatoxin B2 (AFB2), aflatoxin G1 (AFG1) and aflatoxin G2 (AFG2). Within the aflatoxin pathway, with the cytochrome P450 monooxygenase aflN, the versicolorin reductase aflM, is involved in conversion of VERA to demethylsterigmatocystin (DMST). The biosynthesis of aflatoxins begins with the norsolorinic acid synthase aflC that combines a hexanoyl starter unit produced by the fatty acid synthase aflA/aflB and 7 malonyl-CoA extender units to synthesize the precursor NOR. The second step is the conversion of NOR to averantin and requires the norsolorinic acid ketoreductase aflD, which catalyzes the dehydration of norsolorinic acid to form (1'S)-averantin. The norsolorinic acid reductases aflE and aflF may also play a role in the conversion of NOR to AVN. The cytochrome P450 monooxygenase aflG then catalyzes the hydroxylation of AVN to 5'hydroxyaverantin (HAVN). The next step is performed by the 5'-hydroxyaverantin dehydrogenase aflH that transforms HAVN to 5'-oxoaverantin (OAVN) which is further converted to averufin (AVF) by aflK that plays a dual role in the pathway, as a 5'-oxoaverantin cyclase that mediates conversion of 5'-oxoaverantin, as well as a versicolorin B synthase in a later step in the pathway. The averufin oxidase aflI catalyzes the conversion of AVF to versiconal hemiacetal acetate (VHA). VHA is then the substrate for the versiconal hemiacetal acetate esterase aflJ to yield versiconal (VAL). Versicolorin B synthase aflK then converts VAL to versicolorin B (VERB) by closing the bisfuran ring of aflatoxin which is required for DNA-binding, thus giving to aflatoxin its activity as a mutagen. Then, the activity of the versicolorin B desaturase aflL leads to versicolorin A (VERA). A branch point starts from VERB since it can also be converted to dihydrodemethylsterigmatocystin (DMDHST), probably also by aflL, VERA being a precursor for aflatoxins B1 and G1, and DMDHST for aflatoxins B2 and G2. Next, the versicolorin reductase aflM and the cytochrome P450 monooxygenase aflN are involved in conversion of VERA to demethylsterigmatocystin (DMST). AflX and aflY seem also involved in this step, through probable aflX-mediated epoxide ring-opening step following versicolorin A oxidation and aflY-mediated Baeyer-Villiger oxidation required for the formation of the xanthone ring. The methyltransferase aflO then leads to the modification of DMST to sterigmatocystin (ST), and of DMDHST to dihydrosterigmatocystin (DHST). Both ST and DHST are then substrates of the O-methyltransferase aflP to yield O-methylsterigmatocystin (OMST) and dihydro-O-methylsterigmatocystin (DHOMST), respectively. Finally OMST is converted to aflatoxins B1 and G1, and DHOMST to aflatoxins B2 and G2, via the action of several enzymes including O-methylsterigmatocystin oxidoreductase aflQ, the cytochrome P450 monooxygenase aflU, but also the NADH-dependent flavin oxidoreductase nadA which is specifically required for the synthesis of AFG1. This chain is Versicolorin reductase 1, found in Aspergillus parasiticus (strain ATCC 56775 / NRRL 5862 / SRRC 143 / SU-1).